The sequence spans 420 residues: Trichothecene biosynthesis transcription regulator TRI10 (420 aa).

It belongs to the TRI10 transcription regulator family.

It localises to the nucleus. In terms of biological role, transcriptional activator of all of the trichothecene biosynthesis genes. Acts upstream of the cluster-encoded transcription factor TRI6 and is necessary for full expression of both the other trichothecene genes and the genes for the primary metabolic pathway that precedes the trichothecene biosynthetic pathway. In Fusarium sporotrichioides, this protein is Trichothecene biosynthesis transcription regulator TRI10.